We begin with the raw amino-acid sequence, 2185 residues long: Genome polyprotein (2185 aa).

Residue Gly-2 is the site of N-myristoyl glycine; by host attachment. Residues Gly-2–Gln-1495 lie on the Cytoplasmic side of the membrane. Residues Phe-566–Val-582 are amphipathic alpha-helix. Active-site for protease 2A activity residues include His-872 and Asp-890. The Zn(2+) site is built by Cys-907 and Cys-909. Cys-961 (for protease 2A activity) is an active-site residue. Zn(2+) contacts are provided by Cys-967 and His-969. A membrane-binding region spans residues Asn-1101–Gln-1173. Residues Asn-1101–Thr-1239 are oligomerization. The tract at residues Ala-1122–Gln-1126 is RNA-binding. Residues Glu-1205–Asn-1361 enclose the SF3 helicase domain. 3 residues coordinate Zn(2+): Cys-1369, Cys-1381, and Cys-1386. The C4-type; degenerate zinc-finger motif lies at Cys-1369 to Cys-1386. The interval Glu-1413–Val-1420 is RNA-binding. An oligomerization region spans residues Leu-1424–Gln-1429. The stretch at Ala-1496–Tyr-1511 is an intramembrane region. Residues Lys-1512–Phe-2185 are Cytoplasmic-facing. Residue Tyr-1521 is modified to O-(5'-phospho-RNA)-tyrosine. In terms of domain architecture, Peptidase C3 spans Gly-1541–Phe-1719. Residues His-1580, Glu-1611, and Cys-1687 each act as for protease 3C activity in the active site. Residues Gly-1950–Leu-2066 enclose the RdRp catalytic domain. Mg(2+) contacts are provided by Asp-1956 and Asp-2052.

It belongs to the picornaviruses polyprotein family. In terms of assembly, interacts with capsid protein VP1 and capsid protein VP3 to form heterotrimeric protomers. Interacts with capsid protein VP0, and capsid protein VP3 to form heterotrimeric protomers. Five protomers subsequently associate to form pentamers which serve as building blocks for the capsid. Interacts with capsid protein VP2, capsid protein VP3 and capsid protein VP4 following cleavage of capsid protein VP0. As to quaternary structure, interacts with capsid protein VP1 and capsid protein VP3 in the mature capsid. In terms of assembly, interacts with capsid protein VP0 and capsid protein VP1 to form heterotrimeric protomers. Five protomers subsequently associate to form pentamers which serve as building blocks for the capsid. Interacts with capsid protein VP4 in the mature capsid. Interacts with protein 2C; this interaction may be important for virion morphogenesis. Interacts with capsid protein VP1 and capsid protein VP3. As to quaternary structure, homodimer. In terms of assembly, homohexamer; forms a hexameric ring structure with 6-fold symmetry characteristic of AAA+ ATPases. Interacts (via N-terminus) with host RTN3 (via reticulon domain); this interaction is important for viral replication. Interacts with capsid protein VP3; this interaction may be important for virion morphogenesis. Interacts with protein 3CD. As to quaternary structure, homodimer. Interacts with host GBF1. Interacts (via GOLD domain) with host ACBD3 (via GOLD domain); this interaction allows the formation of a viral protein 3A/ACBD3 heterotetramer with a 2:2 stoichiometry, which will stimulate the recruitment of host PI4KB in order to synthesize PI4P at the viral RNA replication sites. In terms of assembly, interacts with RNA-directed RNA polymerase. Interacts with protein 3AB and with RNA-directed RNA polymerase. As to quaternary structure, interacts with Viral protein genome-linked and with protein 3CD. Requires Mg(2+) as cofactor. In terms of processing, specific enzymatic cleavages in vivo by the viral proteases yield processing intermediates and the mature proteins. Post-translationally, myristoylation is required for the formation of pentamers during virus assembly. Further assembly of 12 pentamers and a molecule of genomic RNA generates the provirion. During virion maturation, immature virions are rendered infectious following cleavage of VP0 into VP4 and VP2. This maturation seems to be an autocatalytic event triggered by the presence of RNA in the capsid and it is followed by a conformational change infectious virion. In terms of processing, myristoylation is required during RNA encapsidation and formation of the mature virus particle. Post-translationally, VPg is uridylylated by the polymerase into VPg-pUpU. This acts as a nucleotide-peptide primer for the genomic RNA replication.

It localises to the virion. The protein resides in the host cytoplasm. It is found in the host cytoplasmic vesicle membrane. The protein localises to the host nucleus. It carries out the reaction a ribonucleoside 5'-triphosphate + H2O = a ribonucleoside 5'-diphosphate + phosphate + H(+). The enzyme catalyses Selective cleavage of Tyr-|-Gly bond in the picornavirus polyprotein.. It catalyses the reaction RNA(n) + a ribonucleoside 5'-triphosphate = RNA(n+1) + diphosphate. The catalysed reaction is Selective cleavage of Gln-|-Gly bond in the poliovirus polyprotein. In other picornavirus reactions Glu may be substituted for Gln, and Ser or Thr for Gly.. Replication or transcription is subject to high level of random mutations by the nucleotide analog ribavirin. Functionally, forms an icosahedral capsid of pseudo T=3 symmetry with capsid proteins VP2 and VP3. The capsid is 300 Angstroms in diameter, composed of 60 copies of each capsid protein and enclosing the viral positive strand RNA genome. Capsid protein VP1 mainly forms the vertices of the capsid. Capsid protein VP1 interacts with host cell receptor to provide virion attachment to target host cells. This attachment induces virion internalization. Tyrosine kinases are probably involved in the entry process. After binding to its receptor, the capsid undergoes conformational changes. Capsid protein VP1 N-terminus (that contains an amphipathic alpha-helix) and capsid protein VP4 are externalized. Together, they shape a pore in the host membrane through which viral genome is translocated to host cell cytoplasm. In terms of biological role, forms an icosahedral capsid of pseudo T=3 symmetry with capsid proteins VP2 and VP3. The capsid is 300 Angstroms in diameter, composed of 60 copies of each capsid protein and enclosing the viral positive strand RNA genome. Lies on the inner surface of the capsid shell. After binding to the host receptor, the capsid undergoes conformational changes. Capsid protein VP4 is released, Capsid protein VP1 N-terminus is externalized, and together, they shape a pore in the host membrane through which the viral genome is translocated into the host cell cytoplasm. Its function is as follows. Component of immature procapsids, which is cleaved into capsid proteins VP4 and VP2 after maturation. Allows the capsid to remain inactive before the maturation step. Functionally, cysteine protease that cleaves viral polyprotein and specific host proteins. It is responsible for the autocatalytic cleavage between the P1 and P2 regions, which is the first cleavage occurring in the polyprotein. Also cleaves the host translation initiation factor EIF4G1, in order to shut down the capped cellular mRNA translation. Inhibits the host nucleus-cytoplasm protein and RNA trafficking by cleaving host members of the nuclear pores. Counteracts stress granule formation probably by antagonizing its assembly or promoting its dissassembly. In terms of biological role, plays an essential role in the virus replication cycle by acting as a viroporin. Creates a pore in the host endoplasmic reticulum and as a consequence releases Ca2+ in the cytoplasm of infected cell. In turn, high levels of cytoplasmic calcium may trigger membrane trafficking and transport of viral ER-associated proteins to viroplasms, sites of viral genome replication. Induces and associates with structural rearrangements of intracellular membranes. Displays RNA-binding, nucleotide binding and NTPase activities. May play a role in virion morphogenesis and viral RNA encapsidation by interacting with the capsid protein VP3. Its function is as follows. Localizes the viral replication complex to the surface of membranous vesicles. Together with protein 3CD binds the Cis-Active RNA Element (CRE) which is involved in RNA synthesis initiation. Acts as a cofactor to stimulate the activity of 3D polymerase, maybe through a nucleid acid chaperone activity. Functionally, localizes the viral replication complex to the surface of membranous vesicles. It inhibits host cell endoplasmic reticulum-to-Golgi apparatus transport and causes the disassembly of the Golgi complex, possibly through GBF1 interaction. This would result in depletion of MHC, trail receptors and IFN receptors at the host cell surface. Plays an essential role in viral RNA replication by recruiting ACBD3 and PI4KB at the viral replication sites, thereby allowing the formation of the rearranged membranous structures where viral replication takes place. In terms of biological role, acts as a primer for viral RNA replication and remains covalently bound to viral genomic RNA. VPg is uridylylated prior to priming replication into VPg-pUpU. The oriI viral genomic sequence may act as a template for this. The VPg-pUpU is then used as primer on the genomic RNA poly(A) by the RNA-dependent RNA polymerase to replicate the viral genome. During genome replication, the VPg-RNA linkage is removed by the host TDP2, thereby accelerating replication. During the late stage of the replication cycle, host TDP2 is excluded from sites of viral RNA synthesis and encapsidation, allowing for the generation of progeny virions. Involved in the viral replication complex and viral polypeptide maturation. It exhibits protease activity with a specificity and catalytic efficiency that is different from protease 3C. Protein 3CD lacks polymerase activity. Protein 3CD binds to the 5'UTR of the viral genome. Its function is as follows. Major viral protease that mediates proteolytic processing of the polyprotein. Cleaves host EIF5B, contributing to host translation shutoff. Also cleaves host PABPC1, contributing to host translation shutoff. Cleaves host NLRP1, triggers host N-glycine-mediated degradation of the autoinhibitory NLRP1 N-terminal fragment. Functionally, replicates the viral genomic RNA on the surface of intracellular membranes. May form linear arrays of subunits that propagate along a strong head-to-tail interaction called interface-I. Covalently attaches UMP to a tyrosine of VPg, which is used to prime RNA synthesis. The positive stranded RNA genome is first replicated at virus induced membranous vesicles, creating a dsRNA genomic replication form. This dsRNA is then used as template to synthesize positive stranded RNA genomes. ss(+)RNA genomes are either translated, replicated or encapsidated. The polypeptide is Genome polyprotein (Swine vesicular disease virus (strain H/3 '76) (SVDV)).